We begin with the raw amino-acid sequence, 558 residues long: MATMEVEAAAATVLAAPLLSSSAILKLLLFVVTLSYLARALRRPRKSTTKCSSTTCASPPAGVGNPPLPPGPVPWPVVGNLPEMLLNKPAFRWIHQMMREMGTDIACVKLGGVHVVSITCPEIAREVLRKQDANFISRPLTFASETFSGGYRNAVLSPYGDQWKKMRRVLTSEIICPSRHAWLHDKRTDEADNLTRYVYNLATKAATGDVAVDVRHVARHYCGNVIRRLMFNRRYFGEPQADGGPGPMEVLHMDAVFTSLGLLYAFCVSDYLPWLRGLDLDGHEKIVKEANVAVNRLHDTVIDDRWRQWKSGERQEMEDFLDVLITLKDAQGNPLLTIEEVKAQSQDITFAAVDNPSNAVEWALAEMVNNPEVMAKAMEELDRVVGRERLVQESDIPKLNYVKACIREAFRLHPVAPFNVPHVALADTTIAGYRVPKGSHVILSRTGLGRNPRVWDEPLRFYPDRHLATAASDVALTENDLRFISFSTGRRGCIAASLGTAMSVMLFGRLLQGFTWSKPAGVEAVDLSESKSDTFMATPLVLHAEPRLPAHLYPSISI.

Residues 13–33 (VLAAPLLSSSAILKLLLFVVT) form a helical membrane-spanning segment. The interval 48 to 67 (TTKCSSTTCASPPAGVGNPP) is disordered. Positions 49–65 (TKCSSTTCASPPAGVGN) are enriched in low complexity. Heme b is bound by residues arginine 138, arginine 167, histidine 422, arginine 491, and cysteine 493.

It belongs to the cytochrome P450 family. The cofactor is heme b.

It is found in the endoplasmic reticulum membrane. The enzyme catalyses L-tyrosine + 2 reduced [NADPH--hemoprotein reductase] + 2 O2 = (E)-4-hydroxyphenylacetaldehyde oxime + 2 oxidized [NADPH--hemoprotein reductase] + CO2 + 3 H2O + 2 H(+). It catalyses the reaction L-tyrosine + reduced [NADPH--hemoprotein reductase] + O2 = N-hydroxy-L-tyrosine + oxidized [NADPH--hemoprotein reductase] + H2O + 2 H(+). It carries out the reaction N-hydroxy-L-tyrosine + reduced [NADPH--hemoprotein reductase] + O2 = N,N-dihydroxy-L-tyrosine + oxidized [NADPH--hemoprotein reductase] + H2O + H(+). The catalysed reaction is N,N-dihydroxy-L-tyrosine + H(+) = (E)-4-hydroxyphenylacetaldehyde oxime + CO2 + H2O. Its pathway is secondary metabolite biosynthesis; dhurrin biosynthesis; dhurrin from L-tyrosine: step 1/3. Functionally, cytochrome P450 involved in the biosynthesis of the cyanogenic glucoside dhurrin. Catalyzes the conversion of L-tyrosine to p-hydroxyphenylacetaldehyde oxime, via the N-hydroxy-L-tyrosine and N,N-dihydroxy-L-tyrosine intermediates. Produces the (E) isomer of the final oxime product. The polypeptide is Tyrosine N-monooxygenase (CYP79A1) (Sorghum bicolor (Sorghum)).